Reading from the N-terminus, the 242-residue chain is tRNA pseudouridine synthase A (242 aa).

Asp51 serves as the catalytic Nucleophile. Tyr107 lines the substrate pocket.

It belongs to the tRNA pseudouridine synthase TruA family. In terms of assembly, homodimer.

The enzyme catalyses uridine(38/39/40) in tRNA = pseudouridine(38/39/40) in tRNA. Its function is as follows. Formation of pseudouridine at positions 38, 39 and 40 in the anticodon stem and loop of transfer RNAs. The chain is tRNA pseudouridine synthase A from Helicobacter pylori (strain G27).